The primary structure comprises 246 residues: Orotidine 5'-phosphate decarboxylase (246 aa).

Residues aspartate 22, lysine 44, 71-80 (DLKYHDIPHT), threonine 130, arginine 191, glutamine 201, glycine 221, and arginine 222 contribute to the substrate site. Lysine 73 (proton donor) is an active-site residue.

The protein belongs to the OMP decarboxylase family. Type 1 subfamily. In terms of assembly, homodimer.

It carries out the reaction orotidine 5'-phosphate + H(+) = UMP + CO2. It functions in the pathway pyrimidine metabolism; UMP biosynthesis via de novo pathway; UMP from orotate: step 2/2. Catalyzes the decarboxylation of orotidine 5'-monophosphate (OMP) to uridine 5'-monophosphate (UMP). This chain is Orotidine 5'-phosphate decarboxylase, found in Neisseria meningitidis serogroup B (strain ATCC BAA-335 / MC58).